Here is a 533-residue protein sequence, read N- to C-terminus: RNA end formation protein 2 (533 aa).

Disordered stretches follow at residues 187–254, 260–279, and 321–344; these read SNST…SSMK, LFNK…SKKK, and SSST…PLKK. A compositionally biased stretch (basic and acidic residues) spans 206–222; that stretch reads KIKDSEKEKEKEKDKSK. The span at 242 to 252 shows a compositional bias: low complexity; the sequence is SSPSPTASTSS. Over residues 321–338 the composition is skewed to low complexity; the sequence is SSSTSGSSTTTVATPASS.

In terms of assembly, interacts with FIR1. Component of the cleavage and polyadenylation factor (CPF) complex, which is composed of PTI1, SYC1, SSU72, GLC7, MPE1, REF2, PFS2, PTA1, YSH1/BRR5, SWD2, CFT2/YDH1, YTH1, CFT1/YHH1, FIP1 and PAP1. Component of the APT complex, which is a subcomplex of CPF, and is composed of PTI1, SYC1, SSU72, GLC7, REF2, PTA1 and SWD2.

It localises to the nucleus. In terms of biological role, RNA-binding component of the cleavage and polyadenylation factor (CPF) complex, which plays a key role in polyadenylation-dependent pre-mRNA 3'-end formation and cooperates with cleavage factors including the CFIA complex and NAB4/CFIB. Negative regulator of poly(A) synthesis. Component of the APT complex, which may be involved in polyadenylation-independent transcript 3'-end formation. REF2 is required for 3'-end formation of snoRNAs. This chain is RNA end formation protein 2 (REF2), found in Saccharomyces cerevisiae (strain ATCC 204508 / S288c) (Baker's yeast).